Here is a 124-residue protein sequence, read N- to C-terminus: Protein MGF 110-4L (124 aa).

The signal sequence occupies residues 1 to 28; the sequence is MLVIFLGILGLLANQVLGLPTQAGGHLR. Residue asparagine 64 is glycosylated (N-linked (GlcNAc...) asparagine; by host). The Prevents secretion from ER motif lies at 121–124; it reads KEDL.

Belongs to the asfivirus MGF 110 family.

It is found in the virion. The protein localises to the host endoplasmic reticulum-Golgi intermediate compartment. Causes the redistribution of lumenal ER protein to an enlarged ERGIC compartment. The sequence is that of Protein MGF 110-4L from African swine fever virus (strain Badajoz 1971 Vero-adapted) (Ba71V).